The sequence spans 173 residues: MTRILGIDPGSQRTGVGVIDVDEYGCSHHVYHAPLVLLGQSSFAGRLKQLLLGLSAVIEEYSPKEVAIEKVFMSKNADSALKLGQARGVAISAVVLRDLPVHEYAARQIKLAVVGRGGADKQQIQHMVGVMLNLQGRLQSDAADALAVAITHAHVSATAQRLGVSTKQAWSRK.

Residues Asp-8, Glu-69, and Asp-141 contribute to the active site. The Mg(2+) site is built by Asp-8, Glu-69, and Asp-141.

The protein belongs to the RuvC family. Homodimer which binds Holliday junction (HJ) DNA. The HJ becomes 2-fold symmetrical on binding to RuvC with unstacked arms; it has a different conformation from HJ DNA in complex with RuvA. In the full resolvosome a probable DNA-RuvA(4)-RuvB(12)-RuvC(2) complex forms which resolves the HJ. Mg(2+) is required as a cofactor.

It localises to the cytoplasm. The catalysed reaction is Endonucleolytic cleavage at a junction such as a reciprocal single-stranded crossover between two homologous DNA duplexes (Holliday junction).. Functionally, the RuvA-RuvB-RuvC complex processes Holliday junction (HJ) DNA during genetic recombination and DNA repair. Endonuclease that resolves HJ intermediates. Cleaves cruciform DNA by making single-stranded nicks across the HJ at symmetrical positions within the homologous arms, yielding a 5'-phosphate and a 3'-hydroxyl group; requires a central core of homology in the junction. The consensus cleavage sequence is 5'-(A/T)TT(C/G)-3'. Cleavage occurs on the 3'-side of the TT dinucleotide at the point of strand exchange. HJ branch migration catalyzed by RuvA-RuvB allows RuvC to scan DNA until it finds its consensus sequence, where it cleaves and resolves the cruciform DNA. The chain is Crossover junction endodeoxyribonuclease RuvC from Xylella fastidiosa (strain Temecula1 / ATCC 700964).